The sequence spans 235 residues: uncharacterized protein (235 aa).

This is an uncharacterized protein from Salmonella typhimurium (strain LT2 / SGSC1412 / ATCC 700720).